The following is a 624-amino-acid chain: MKGQETRGFQSEVKQLLHLMIHSLYSNKEIFLRELISNASDAADKLRFRALSNPDLYEGDGELRVRVSFDKDKRTLTIADNGVGMNRDEVIDHLGTIAKSGTKSFLESMGSDQAKDSQLIGQFGVGFYSAFIVADKVTVRTRAAGDKPENGVFWESAGEGEYTVADITKNDRGTEITLHLREGEDEFLDDWRVRSIISKYSDHIALPVEIEKREEKDGETVISWEKINKAQALWTRNKSEIKDDEYNEFYKHIAHDFTDPLTWSHNRVEGKQEYTSLLYIPSQAPWDLWNRDHKHGLKLYVQRVFIMDDAEQFMPNYLRFVRGLIDSNDLPLNVSREILQDSTVTRNLRSALTKRVLQMLEKLAKDDAEKYQTFWKQFGLVLKEGPAEDHANQEAIAKLLRFASTHTDSSAQTVSLEDYVSRMKEGQEKIYYITADSYAAAKNSPHLELLRKKGIEVLLLSDRIDEWMMNYLTEFDGKAFQSVAKADESIEKLADEVDENAKEAEKALEPFVERVKTLLGDRVKEVRLTHRLTDTPAIVTTDADEMSTQMAKLFAAAGQSVPEVKYIFELNPDHVLVKRTADTKDEAQFKEWVELLLDQALFAERGTLEDPNQFIRRMNQLLVS.

Positions 1–336 are a; substrate-binding; it reads MKGQETRGFQ…SNDLPLNVSR (336 aa). The tract at residues 337–552 is b; the sequence is EILQDSTVTR…ADEMSTQMAK (216 aa). Residues 553-624 form a c region; sequence LFAAAGQSVP…IRRMNQLLVS (72 aa).

The protein belongs to the heat shock protein 90 family. As to quaternary structure, homodimer.

The protein resides in the cytoplasm. Its function is as follows. Molecular chaperone. Has ATPase activity. This chain is Chaperone protein HtpG, found in Salmonella typhi.